A 705-amino-acid polypeptide reads, in one-letter code: MARTTPIERYRNFGIMAHIDAGKTTTSERILFYTGVSHKIGEVHDGAAVMDWMEQEQERGITITSAATTAFWSGMDKSMPQHRFNIIDTPGHVDFTIEVERSLRVLDGAVFVLCAVGGVQPQSETVWRQANKYSVPRMAFVNKMDRTGANFDKVVEQLKARLGAYAVPMQVPIGAEDGFEGVVDLLKMKAIHWDTASQGTTFEYSDIPAELVDVATDARSFMVEAAAEASEDLMDKYLNEGDLSEEEILKGLRERTLKVEIVPVFCGSAFKNKGVQAMLDGVVHLLPSPADRPPVQGIDEDEKEDTRAATDTAPFSALAFKIMTDPFVGSLTFFRVYSGTLNSGDQVYNPVKSKKERVGRILQMHSNNREEIKEVRAGDIAAAVGLKDVTTGDTLCAQDKIITLERMVFPEPVISMAVEPKTKSDQEKMGMALGRLAQEDPSFRVKTDEESGQTIISGMGELHLDIIVDRMRREFNVEANVGKPQVAYRETIRKSDVKSDYKHAKQSGGKGQYGHVVIELSPMTEEDRKSDNVKDDFLFINDITGGIIPKEFIPSVEKGLRETITSGPIAGFPVVGVKVKLVFGSYHDVDSSEMAFKLAASMAFKQGFAKASPVLLEPIMKVEIVSPEDYLGDVMGDVSRRRGVLQGQDDSPSGKIINAMIPLGEMFGYATSLRSMSQGRATFSMEFDHYEEAPANIADAVTKKG.

The region spanning 8–290 is the tr-type G domain; that stretch reads ERYRNFGIMA…GVVHLLPSPA (283 aa). GTP is bound by residues 17–24, 88–92, and 142–145; these read AHIDAGKT, DTPGH, and NKMD. The tract at residues 290 to 309 is disordered; sequence ADRPPVQGIDEDEKEDTRAA.

This sequence belongs to the TRAFAC class translation factor GTPase superfamily. Classic translation factor GTPase family. EF-G/EF-2 subfamily.

It is found in the cytoplasm. In terms of biological role, catalyzes the GTP-dependent ribosomal translocation step during translation elongation. During this step, the ribosome changes from the pre-translocational (PRE) to the post-translocational (POST) state as the newly formed A-site-bound peptidyl-tRNA and P-site-bound deacylated tRNA move to the P and E sites, respectively. Catalyzes the coordinated movement of the two tRNA molecules, the mRNA and conformational changes in the ribosome. In Xanthomonas oryzae pv. oryzae (strain MAFF 311018), this protein is Elongation factor G.